Reading from the N-terminus, the 83-residue chain is Gas vesicle protein G (83 aa).

The protein belongs to the gas vesicle GvpG family. In terms of assembly, gvpF to GvpM interact with each other in vitro, and may form multi-subunit complex(es).

The protein localises to the gas vesicle. Proteins GvpF to GvpM might be involved in nucleating gas vesicle formation. A minor component of the gas vesicle. Gas vesicles are hollow, gas filled proteinaceous nanostructures found in some microorganisms. They allow positioning of halobacteria at the optimal depth for growth in the poorly aerated, shallow brine pools of their habitat. Its function is as follows. Expression of a 9.5 kb mc-vac DNA fragment containing 2 divergently transcribed regions (gvpD-gvpE-gvpF-gvpG-gvpH-gvpI-gvpJ-gvpK-gvpL-gvpM and gvpA-gvpC-gvpN-gvpO) allows H.volcanii to produce gas vesicles. The chain is Gas vesicle protein G from Haloferax mediterranei (strain ATCC 33500 / DSM 1411 / JCM 8866 / NBRC 14739 / NCIMB 2177 / R-4) (Halobacterium mediterranei).